We begin with the raw amino-acid sequence, 666 residues long: MLRHCSLGLVTTQISAIAPLRLVGSPLFCRSYQDFAGRDRRSSRSREDKPYNSRTRRFDDEGSSNYSSSRDDYRGQNTYGFRGKAPRKNFSSRDNYSSRDNFRSSNGFQERGYKNKFSKNTKSYSKGGNTSGSFIPEGKMAKMTHIGKSDSDIVVTLESLLEKNVISRDLYDSISRMGFEQLTPVQQKTIEPIITNSDSDIIARAKTGTGKTFAFLLPIFQHLLNTKIDSQNKVKSVIVAPTRDLALQIEDEVRKIHSKNRKLKAFECVSLVGGTNFDRSIRYIEKVSPSIVIGTPGRLIDVMEKFGNKFFKDVDFKVLDEADRLLEIGFKEDLSYINKMLNTLNTNSTEHIRTLLFSATLDHKVQSLSNDIMNKEECLYIDTIDENEPQAHEKIDQTLVVGETFADNLYAAIEHIREFGTKTPNYKSILFLPTVKFTKFMATILKRQVKLPIYEFHGQIDQKKRTRIVNEFKTMKKGLLVCTDVGARGMDFPNITEVLQIGLPSEIPNYIHRIGRTARSGKEGSSVTFISKEELPFFEILEDKHNVTIKNIRKFEAQPHVMADLSLRLHVSEDELQEIILSVISFYRACLKDYGINYKNMLPQIAHTYGTLLQNEDKRIPLAGNHILNRLGMDRDPIATKMFQIDEMPNQYNRRGPRSNYNRRRF.

A mitochondrion-targeting transit peptide spans 1-22 (MLRHCSLGLVTTQISAIAPLRL). Residues 38–60 (RDRRSSRSREDKPYNSRTRRFDD) are compositionally biased toward basic and acidic residues. The segment at 38 to 131 (RDRRSSRSRE…KSYSKGGNTS (94 aa)) is disordered. The segment covering 120 to 131 (NTKSYSKGGNTS) has biased composition (polar residues). The Q motif signature appears at 159 to 187 (SLLEKNVISRDLYDSISRMGFEQLTPVQQ). The Helicase ATP-binding domain maps to 192 to 379 (PIITNSDSDI…NDIMNKEECL (188 aa)). Position 205–212 (205–212 (AKTGTGKT)) interacts with ATP. Positions 320–323 (DEAD) match the DEAD box motif. Residues 408 to 560 (NLYAAIEHIR…NIRKFEAQPH (153 aa)) form the Helicase C-terminal domain.

The protein belongs to the DEAD box helicase family. DDX18/HAS1 subfamily.

It is found in the mitochondrion matrix. It carries out the reaction ATP + H2O = ADP + phosphate + H(+). ATP-dependent RNA helicase required for mitochondrial splicing of group I and II introns. Also required for efficient mitochondrial translation. This Candida glabrata (strain ATCC 2001 / BCRC 20586 / JCM 3761 / NBRC 0622 / NRRL Y-65 / CBS 138) (Yeast) protein is ATP-dependent RNA helicase MSS116, mitochondrial (MSS116).